The primary structure comprises 165 residues: Lipoprotein signal peptidase (165 aa).

Transmembrane regions (helical) follow at residues 11–31 (YWVLALAAIVLDQWSKWAVLS), 41–61 (VIPSFFDLTLVYNPGAAFSFL), 64–84 (QGGWQKYFFLVLAVAVSAYLV), and 92–112 (FATLGKTGAAMIIGGALGNVI). Active-site residues include D122 and D140. Residues 132–152 (FYPAFNIADSFICVGAVLAVL) form a helical membrane-spanning segment.

Belongs to the peptidase A8 family.

It is found in the cell inner membrane. The catalysed reaction is Release of signal peptides from bacterial membrane prolipoproteins. Hydrolyzes -Xaa-Yaa-Zaa-|-(S,diacylglyceryl)Cys-, in which Xaa is hydrophobic (preferably Leu), and Yaa (Ala or Ser) and Zaa (Gly or Ala) have small, neutral side chains.. Its pathway is protein modification; lipoprotein biosynthesis (signal peptide cleavage). Its function is as follows. This protein specifically catalyzes the removal of signal peptides from prolipoproteins. This chain is Lipoprotein signal peptidase, found in Neisseria meningitidis serogroup A / serotype 4A (strain DSM 15465 / Z2491).